We begin with the raw amino-acid sequence, 245 residues long: Derlin-1 (245 aa).

Residues 1–5 (MDLEN) are Cytoplasmic-facing. Residues 6 to 26 (FLLGIPIVTRYWFLASTIIPL) traverse the membrane as a helical segment. Residues 27-57 (LGRFGFINVQWMFLQWDLVVNKFQFWRPLTA) are Lumenal-facing. Residues 58–78 (LIYYPVTPQTGFHWLMMCYFL) traverse the membrane as a helical segment. Residues 79–100 (YNYSKALESETYRGRSADYLFM) lie on the Cytoplasmic side of the membrane. The helical transmembrane segment at 101 to 121 (LIFNWFFCSGLCMALDIYFLL) threads the bilayer. Residues 122–166 (EPMVISVLYVWCQVNKDTIVSFWFGMRFPARYLPWVLWGFNAVLR) are Lumenal-facing. The helical transmembrane segment at 167-187 (GGGTNELVGILVGHAYFFVAL) threads the bilayer. Over 188 to 245 (KYPDEYGVDLISTPEFLHRLIPDEDGGIHGQDGNIRGARQQPRGHQWPGGVGARLGGN) the chain is Cytoplasmic. A disordered region spans residues 218 to 245 (QDGNIRGARQQPRGHQWPGGVGARLGGN). The segment covering 234–245 (WPGGVGARLGGN) has biased composition (gly residues).

The protein belongs to the derlin family.

The protein localises to the endoplasmic reticulum membrane. In terms of biological role, specifically required for the degradation process of misfolded endoplasmic reticulum (ER) luminal proteins. Participates in the transfer of misfolded proteins from the ER to the cytosol, where they are destroyed by the proteasome in a ubiquitin-dependent manner. The chain is Derlin-1 from Caenorhabditis elegans.